The following is a 126-amino-acid chain: MPDPAKSAPAPKKGSKKAVTKAQKKDGKKRKRSRKESYSVYVYKVLKQVHPDTGISSKAMGIMNSFVNDIFERIAGEASRLAHYNKRSTITSREIQTAVRLLLPGELAKHAVSEGTKAVTKYTSSK.

Low complexity predominate over residues 1–12 (MPDPAKSAPAPK). The tract at residues 1–36 (MPDPAKSAPAPKKGSKKAVTKAQKKDGKKRKRSRKE) is disordered. Pro-2 is subject to N-acetylproline. Position 6 is an N6-(2-hydroxyisobutyryl)lysine; alternate (Lys-6). Lys-6 is subject to N6-(beta-hydroxybutyryl)lysine; alternate. Lys-6 carries the post-translational modification N6-acetyllysine; alternate. At Lys-6 the chain carries N6-butyryllysine; alternate. At Lys-6 the chain carries N6-crotonyllysine; alternate. Lys-6 is modified (N6-lactoyllysine; alternate). Lys-6 participates in a covalent cross-link: Glycyl lysine isopeptide (Lys-Gly) (interchain with G-Cter in SUMO2); alternate. Ser-7 carries the post-translational modification ADP-ribosylserine. Lys-12 carries the N6-(beta-hydroxybutyryl)lysine; alternate modification. N6-acetyllysine; alternate occurs at positions 12 and 13. An N6-crotonyllysine; alternate mark is found at Lys-12 and Lys-13. Lys-12 is subject to N6-lactoyllysine; alternate. Lys-13 carries the N6-(2-hydroxyisobutyryl)lysine; alternate modification. Ser-15 bears the Phosphoserine; by STK4/MST1 mark. 4 positions are modified to N6-acetyllysine; alternate: Lys-16, Lys-17, Lys-21, and Lys-24. N6-crotonyllysine; alternate occurs at positions 16, 17, 21, and 24. 4 positions are modified to N6-lactoyllysine; alternate: Lys-16, Lys-17, Lys-21, and Lys-24. Lys-17 and Lys-21 each carry N6-(beta-hydroxybutyryl)lysine; alternate. An N6-glutaryllysine; alternate modification is found at Lys-17. An N6-(2-hydroxyisobutyryl)lysine; alternate mark is found at Lys-21 and Lys-24. Lys-21 is modified (N6-butyryllysine; alternate). Residue Lys-21 forms a Glycyl lysine isopeptide (Lys-Gly) (interchain with G-Cter in SUMO2); alternate linkage. Position 25 is an N6-(2-hydroxyisobutyryl)lysine (Lys-25). Lys-35 bears the N6-(2-hydroxyisobutyryl)lysine; alternate mark. Lys-35 is modified (N6-(beta-hydroxybutyryl)lysine; alternate). Residue Lys-35 is modified to N6-crotonyllysine; alternate. Lys-35 is subject to N6-glutaryllysine; alternate. At Lys-35 the chain carries N6-succinyllysine; alternate. Lys-35 is covalently cross-linked (Glycyl lysine isopeptide (Lys-Gly) (interchain with G-Cter in ubiquitin); alternate). A PolyADP-ribosyl glutamic acid modification is found at Glu-36. A Phosphoserine; by AMPK modification is found at Ser-37. Residues Lys-44, Lys-47, and Lys-58 each carry the N6-(2-hydroxyisobutyryl)lysine; alternate modification. N6-lactoyllysine; alternate is present on Lys-44. 2 positions are modified to N6-glutaryllysine; alternate: Lys-44 and Lys-47. Lys-47 bears the N6-methyllysine; alternate mark. N6,N6-dimethyllysine; alternate is present on Lys-58. Arg-80 carries the post-translational modification Dimethylated arginine. The residue at position 86 (Lys-86) is an N6-(2-hydroxyisobutyryl)lysine; alternate. The residue at position 86 (Lys-86) is an N6-(beta-hydroxybutyryl)lysine; alternate. Lys-86 is modified (N6-acetyllysine; alternate). Lys-86 carries the post-translational modification N6-lactoyllysine; alternate. Lys-86 bears the N6,N6,N6-trimethyllysine; alternate mark. 2 positions are modified to omega-N-methylarginine: Arg-87 and Arg-93. Lys-109 carries the N6-(2-hydroxyisobutyryl)lysine; alternate modification. An N6-lactoyllysine; alternate modification is found at Lys-109. The residue at position 109 (Lys-109) is an N6-glutaryllysine; alternate. Residue Lys-109 is modified to N6-methyllysine; alternate. Ser-113 is a glycosylation site (O-linked (GlcNAc) serine). Thr-116 carries the phosphothreonine modification. 2 positions are modified to N6-(2-hydroxyisobutyryl)lysine; alternate: Lys-117 and Lys-121. N6-(beta-hydroxybutyryl)lysine; alternate occurs at positions 117 and 121. An N6-lactoyllysine; alternate mark is found at Lys-117 and Lys-121. Residues Lys-117 and Lys-121 each carry the N6-glutaryllysine; alternate modification. Residues Lys-117 and Lys-121 each carry the N6-succinyllysine; alternate modification. N6-malonyllysine; alternate is present on Lys-117. N6-methylated lysine; alternate is present on Lys-117. Residue Lys-121 forms a Glycyl lysine isopeptide (Lys-Gly) (interchain with G-Cter in ubiquitin); alternate linkage.

Belongs to the histone H2B family. In terms of assembly, the nucleosome is a histone octamer containing two molecules each of H2A, H2B, H3 and H4 assembled in one H3-H4 heterotetramer and two H2A-H2B heterodimers. The octamer wraps approximately 147 bp of DNA. Found in a complex with PPAR9; DTX3L AND STAT1; the interaction is likely to induce DTX3L-mediated ubiquitination of H2BC9/H2BJ. Monoubiquitination at Lys-35 (H2BK34Ub) by the MSL1/MSL2 dimer is required for histone H3 'Lys-4' (H3K4me) and 'Lys-79' (H3K79me) methylation and transcription activation at specific gene loci, such as HOXA9 and MEIS1 loci. Similarly, monoubiquitination at Lys-121 (H2BK120Ub) by the RNF20/40 complex gives a specific tag for epigenetic transcriptional activation and is also prerequisite for histone H3 'Lys-4' and 'Lys-79' methylation. It also functions cooperatively with the FACT dimer to stimulate elongation by RNA polymerase II. H2BK120Ub also acts as a regulator of mRNA splicing: deubiquitination by USP49 is required for efficient cotranscriptional splicing of a large set of exons. Monoubiquitinated by DTX3L upon encephalomyocarditis virus (EMCV)-mediated infection. In terms of processing, phosphorylation at Ser-37 (H2BS36ph) by AMPK in response to stress promotes transcription. Phosphorylated on Ser-15 (H2BS14ph) by STK4/MST1 during apoptosis; which facilitates apoptotic chromatin condensation. Also phosphorylated on Ser-15 in response to DNA double strand breaks (DSBs), and in correlation with somatic hypermutation and immunoglobulin class-switch recombination. Post-translationally, glcNAcylation at Ser-113 promotes monoubiquitination of Lys-121. It fluctuates in response to extracellular glucose, and associates with transcribed genes. ADP-ribosylated by PARP1 or PARP2 on Ser-7 (H2BS6ADPr) in response to DNA damage. H2BS6ADPr promotes recruitment of CHD1L. Poly ADP-ribosylation on Glu-36 (H2BE35ADPr) by PARP1 regulates adipogenesis: it inhibits phosphorylation at Ser-37 (H2BS36ph), thereby blocking expression of pro-adipogenetic genes. In terms of processing, crotonylation (Kcr) is specifically present in male germ cells and marks testis-specific genes in post-meiotic cells, including X-linked genes that escape sex chromosome inactivation in haploid cells. Crotonylation marks active promoters and enhancers and confers resistance to transcriptional repressors. It is also associated with post-meiotically activated genes on autosomes. Post-translationally, lactylated in macrophages by EP300/P300 by using lactoyl-CoA directly derived from endogenous or exogenous lactate, leading to stimulates gene transcription.

Its subcellular location is the nucleus. It is found in the chromosome. Core component of nucleosome. Nucleosomes wrap and compact DNA into chromatin, limiting DNA accessibility to the cellular machineries which require DNA as a template. Histones thereby play a central role in transcription regulation, DNA repair, DNA replication and chromosomal stability. DNA accessibility is regulated via a complex set of post-translational modifications of histones, also called histone code, and nucleosome remodeling. The protein is Histone H2B type 1-H of Homo sapiens (Human).